The chain runs to 567 residues: Synaptotagmin-like protein 1 (567 aa).

The RabBD domain maps to 31 to 87 (LLDLSFLTEEEQEAISDVLKRDAHLRQLEEGRVSKLRASLEDPWQLKILTGDWFQEA). Residues 103 to 255 (RASIRRKKSP…VSSLNSSTLS (153 aa)) are disordered. Residue serine 120 is modified to Phosphoserine. Acidic residues-rich tracts occupy residues 122-135 (GEAE…IEGE) and 170-184 (GQEE…ELEA). A compositionally biased stretch (polar residues) spans 208-219 (ESQPTPAQSKAT). Serine 220 bears the Phosphoserine mark. Residues 235 to 255 (SLDRMLSSSSSVSSLNSSTLS) are compositionally biased toward low complexity. C2 domains lie at 271–390 (VRGS…WLPL) and 403–532 (SRGL…VPWM).

As to quaternary structure, monomer. Binds NCF2 and NRXN1. Binds RAB27A that has been activated by GTP-binding via its N-terminus. In terms of tissue distribution, highly expressed in lung. Detected at lower levels in spleen, liver and kidney, and at very low levels in heart, brain and skeletal muscle. Expressed in cytotoxic T-lymphocytes (CTL).

The protein localises to the endomembrane system. It localises to the cell membrane. Binds phosphatidylinositol 3,4,5-trisphosphate. May play a role in vesicle trafficking. Acts as a RAB27A effector protein and may play a role in cytotoxic granule exocytosis in lymphocytes. The protein is Synaptotagmin-like protein 1 (Sytl1) of Mus musculus (Mouse).